We begin with the raw amino-acid sequence, 410 residues long: NADH-quinone oxidoreductase subunit D (410 aa).

This sequence belongs to the complex I 49 kDa subunit family. As to quaternary structure, NDH-1 is composed of 14 different subunits. Subunits NuoB, C, D, E, F, and G constitute the peripheral sector of the complex.

It localises to the cell inner membrane. It catalyses the reaction a quinone + NADH + 5 H(+)(in) = a quinol + NAD(+) + 4 H(+)(out). NDH-1 shuttles electrons from NADH, via FMN and iron-sulfur (Fe-S) centers, to quinones in the respiratory chain. The immediate electron acceptor for the enzyme in this species is believed to be ubiquinone. Couples the redox reaction to proton translocation (for every two electrons transferred, four hydrogen ions are translocated across the cytoplasmic membrane), and thus conserves the redox energy in a proton gradient. The sequence is that of NADH-quinone oxidoreductase subunit D from Nitratiruptor sp. (strain SB155-2).